We begin with the raw amino-acid sequence, 295 residues long: MIAELEGIDIRENEALKHYTYTQVGGPADFLAFPRNHYELSRIVDYANHNHIPWMVLGNASNLIVRDGGIRGFVIMFDKLNTVRLNGYTLEAEAGANLIETTKVAKFHSLTGFEFACGIPGSIGGAVFMNAGAYGGEIAHIFLSAKVLTPEGKIKKISAREMAFGYRHSVIQETGDIVISAKFALKPGNHDSICQEMNRLNHLRQLKQPLEFPSCGSVFKRPPGHFAGQLIMDANLKGHRVGGVEVSKKHAGFMINVADGSAKDYEELIAHVIKTVEQTSGVRLEPEVRIIGESL.

In terms of domain architecture, FAD-binding PCMH-type spans 23–188; the sequence is QVGGPADFLA…ISAKFALKPG (166 aa). Arginine 167 is a catalytic residue. Serine 217 serves as the catalytic Proton donor. The active site involves glutamate 287.

The protein belongs to the MurB family. FAD is required as a cofactor.

The protein localises to the cytoplasm. It carries out the reaction UDP-N-acetyl-alpha-D-muramate + NADP(+) = UDP-N-acetyl-3-O-(1-carboxyvinyl)-alpha-D-glucosamine + NADPH + H(+). It participates in cell wall biogenesis; peptidoglycan biosynthesis. Its function is as follows. Cell wall formation. The polypeptide is UDP-N-acetylenolpyruvoylglucosamine reductase (Streptococcus equi subsp. zooepidemicus (strain H70)).